The primary structure comprises 389 residues: Chalcone synthase 1 (389 aa).

Cys-164 is a catalytic residue.

This sequence belongs to the thiolase-like superfamily. Chalcone/stilbene synthases family.

It carries out the reaction (E)-4-coumaroyl-CoA + 3 malonyl-CoA + 3 H(+) = 2',4,4',6'-tetrahydroxychalcone + 3 CO2 + 4 CoA. It functions in the pathway secondary metabolite biosynthesis; flavonoid biosynthesis. In terms of biological role, the primary product of this enzyme is 4,2',4',6'-tetrahydroxychalcone (also termed naringenin-chalcone or chalcone) which can under specific conditions spontaneously isomerize into naringenin. The sequence is that of Chalcone synthase 1 (CHS1) from Camellia sinensis (Tea plant).